Here is a 182-residue protein sequence, read N- to C-terminus: Transcription termination/antitermination protein NusG (182 aa).

A KOW domain is found at 131–161 (GEVVRVNDGPFADFNGTVEEVDYEKSRLKVS).

This sequence belongs to the NusG family.

Functionally, participates in transcription elongation, termination and antitermination. The polypeptide is Transcription termination/antitermination protein NusG (Vibrio cholerae serotype O1 (strain ATCC 39315 / El Tor Inaba N16961)).